Reading from the N-terminus, the 462-residue chain is Chitinase 1 (462 aa).

The first 17 residues, 1 to 17 (MILNLIILLAISIVASA), serve as a signal peptide directing secretion. Residues 18-291 (SNIAAYWGQN…NQLYQALSGS (274 aa)) enclose the GH18 domain. Asn-57 carries an N-linked (GlcNAc...) asparagine glycan. The Proton donor role is filled by Glu-147.

The protein belongs to the glycosyl hydrolase 18 family. Chitinase class III subfamily.

The protein resides in the secreted. It catalyses the reaction Random endo-hydrolysis of N-acetyl-beta-D-glucosaminide (1-&gt;4)-beta-linkages in chitin and chitodextrins.. This Candida albicans (Yeast) protein is Chitinase 1 (CHT1).